Here is a 101-residue protein sequence, read N- to C-terminus: NAD(P)H-quinone oxidoreductase subunit 4L, chloroplastic (101 aa).

Helical transmembrane passes span Met-2–Ile-22, Met-32–Phe-52, and Ile-61–Val-81.

Belongs to the complex I subunit 4L family. NDH is composed of at least 16 different subunits, 5 of which are encoded in the nucleus.

The protein localises to the plastid. It localises to the chloroplast thylakoid membrane. It carries out the reaction a plastoquinone + NADH + (n+1) H(+)(in) = a plastoquinol + NAD(+) + n H(+)(out). The catalysed reaction is a plastoquinone + NADPH + (n+1) H(+)(in) = a plastoquinol + NADP(+) + n H(+)(out). NDH shuttles electrons from NAD(P)H:plastoquinone, via FMN and iron-sulfur (Fe-S) centers, to quinones in the photosynthetic chain and possibly in a chloroplast respiratory chain. The immediate electron acceptor for the enzyme in this species is believed to be plastoquinone. Couples the redox reaction to proton translocation, and thus conserves the redox energy in a proton gradient. This is NAD(P)H-quinone oxidoreductase subunit 4L, chloroplastic from Vitis vinifera (Grape).